Reading from the N-terminus, the 127-residue chain is Thioredoxin domain-containing protein 8 (127 aa).

The region spanning 1–92 (MVQIIKDTNE…SQKVTLFSRI (92 aa)) is the Thioredoxin domain. Cysteine 32 and cysteine 35 form a disulfide bridge.

Belongs to the thioredoxin family. As to expression, testis-specific. Only expressed during spermiogenesis, prominently in the Golgi apparatus of pachytene spermatocytes and round and elongated spermatids, with a transient localization in the developing acrosome of round spermatids (at protein level).

The protein resides in the cytoplasm. The protein localises to the golgi apparatus. Its function is as follows. May be required for post-translational modifications of proteins required for acrosomal biogenesis. May act by reducing disulfide bonds within the sperm. The protein is Thioredoxin domain-containing protein 8 (TXNDC8) of Homo sapiens (Human).